The following is a 478-amino-acid chain: Early growth response protein 4 (478 aa).

The interval 275 to 302 is disordered; that stretch reads TEGLPALLTPPGGEGGSGGEGGEFLAAP. Positions 286–296 are enriched in gly residues; that stretch reads GGEGGSGGEGG. C2H2-type zinc fingers lie at residues 372 to 396, 402 to 424, and 430 to 452; these read FACPVESCVRSFARSDELNRHLRIH, FQCRICLRNFSRSDHLTTHVRTH, and FACDVCGRRFARSDEKKRHSKVH.

The protein belongs to the EGR C2H2-type zinc-finger protein family.

It localises to the nucleus. Transcriptional regulator. Recognizes and binds to the DNA sequence 5'-GCGGGGGCG-3' (GSG). Activates the transcription of target genes whose products are required for mitogenesis and differentiation. The sequence is that of Early growth response protein 4 (Egr4) from Mus musculus (Mouse).